The chain runs to 162 residues: Allophycocyanin alpha-B chain (162 aa).

Residue Asn71 is modified to N4-methylasparagine. Cys81 lines the (2R,3E)-phycocyanobilin pocket.

The protein belongs to the phycobiliprotein family. In terms of processing, contains one covalently linked phycocyanobilin chromophore.

It is found in the plastid. The protein localises to the cyanelle thylakoid membrane. Its function is as follows. Allophycocyanin is a photosynthetic bile pigment-protein complex with maximum absorption at approximately 650 nanometers. The polypeptide is Allophycocyanin alpha-B chain (apcD) (Cyanophora paradoxa).